Here is a 98-residue protein sequence, read N- to C-terminus: NADH-ubiquinone oxidoreductase chain 4L (98 aa).

3 helical membrane-spanning segments follow: residues 1 to 21 (MTLV…GLLM), 29 to 49 (SLLC…VTIL), and 61 to 81 (IILL…LVMV).

Belongs to the complex I subunit 4L family. In terms of assembly, core subunit of respiratory chain NADH dehydrogenase (Complex I) which is composed of 45 different subunits.

Its subcellular location is the mitochondrion inner membrane. It carries out the reaction a ubiquinone + NADH + 5 H(+)(in) = a ubiquinol + NAD(+) + 4 H(+)(out). Its function is as follows. Core subunit of the mitochondrial membrane respiratory chain NADH dehydrogenase (Complex I) which catalyzes electron transfer from NADH through the respiratory chain, using ubiquinone as an electron acceptor. Part of the enzyme membrane arm which is embedded in the lipid bilayer and involved in proton translocation. The protein is NADH-ubiquinone oxidoreductase chain 4L (MT-ND4L) of Rousettus aegyptiacus (Egyptian fruit bat).